Here is a 130-residue protein sequence, read N- to C-terminus: Small ribosomal subunit protein uS9 (130 aa).

This sequence belongs to the universal ribosomal protein uS9 family.

This Shewanella loihica (strain ATCC BAA-1088 / PV-4) protein is Small ribosomal subunit protein uS9.